The primary structure comprises 962 residues: Protein kinase ORF73 (962 aa).

Disordered stretches follow at residues 1–28 (MADR…NDRP) and 62–152 (STPA…RATT). The span at 81–90 (DSDDDDEEDN) shows a compositional bias: acidic residues. The segment covering 143 to 152 (YDTTGRRATT) has biased composition (polar residues). The Protein kinase domain maps to 301 to 595 (LRAAPVLGKG…ASDLLKSPRY (295 aa)). Residues 307-315 (LGKGYFGTV) and Lys-324 each bind ATP. Catalysis depends on Asp-434, which acts as the Proton acceptor.

Belongs to the protein kinase superfamily. Ser/Thr protein kinase family.

The catalysed reaction is L-seryl-[protein] + ATP = O-phospho-L-seryl-[protein] + ADP + H(+). The enzyme catalyses L-threonyl-[protein] + ATP = O-phospho-L-threonyl-[protein] + ADP + H(+). This Ictaluridae (bullhead catfishes) protein is Protein kinase ORF73 (ORF73).